We begin with the raw amino-acid sequence, 297 residues long: Light-independent protochlorophyllide reductase iron-sulfur ATP-binding protein (297 aa).

ATP contacts are provided by residues 41 to 46 (GIGKST) and Lys-70. Residue Ser-45 coordinates Mg(2+). The [4Fe-4S] cluster site is built by Cys-126 and Cys-160. Residues 211–212 (NR) and 235–237 (PDL) each bind ATP.

This sequence belongs to the NifH/BchL/ChlL family. Homodimer. Protochlorophyllide reductase is composed of three subunits; BchL, BchN and BchB. [4Fe-4S] cluster serves as cofactor.

The catalysed reaction is chlorophyllide a + oxidized 2[4Fe-4S]-[ferredoxin] + 2 ADP + 2 phosphate = protochlorophyllide a + reduced 2[4Fe-4S]-[ferredoxin] + 2 ATP + 2 H2O. It participates in porphyrin-containing compound metabolism; bacteriochlorophyll biosynthesis (light-independent). Component of the dark-operative protochlorophyllide reductase (DPOR) that uses Mg-ATP and reduced ferredoxin to reduce ring D of protochlorophyllide (Pchlide) to form chlorophyllide a (Chlide). This reaction is light-independent. The L component serves as a unique electron donor to the NB-component of the complex, and binds Mg-ATP. The polypeptide is Light-independent protochlorophyllide reductase iron-sulfur ATP-binding protein (Cereibacter sphaeroides (strain ATCC 17025 / ATH 2.4.3) (Rhodobacter sphaeroides)).